The sequence spans 341 residues: tRNA N6-adenosine threonylcarbamoyltransferase (341 aa).

2 residues coordinate Fe cation: H115 and H119. Substrate is bound by residues 137-141 (AVSGG), D170, G183, D187, and N276. Position 306 (D306) interacts with Fe cation.

Belongs to the KAE1 / TsaD family. Fe(2+) serves as cofactor.

The protein resides in the cytoplasm. It carries out the reaction L-threonylcarbamoyladenylate + adenosine(37) in tRNA = N(6)-L-threonylcarbamoyladenosine(37) in tRNA + AMP + H(+). Its function is as follows. Required for the formation of a threonylcarbamoyl group on adenosine at position 37 (t(6)A37) in tRNAs that read codons beginning with adenine. Is involved in the transfer of the threonylcarbamoyl moiety of threonylcarbamoyl-AMP (TC-AMP) to the N6 group of A37, together with TsaE and TsaB. TsaD likely plays a direct catalytic role in this reaction. The polypeptide is tRNA N6-adenosine threonylcarbamoyltransferase (Lacticaseibacillus casei (strain BL23) (Lactobacillus casei)).